A 243-amino-acid polypeptide reads, in one-letter code: Sec-independent protein translocase protein TatC (243 aa).

7 helical membrane passes run 18–38, 70–90, 106–126, 132–152, 153–173, 191–211, and 213–233; these read VIII…NYVD, IAII…IWSF, MIPV…FTVF, FLLQ…KYIS, FALN…VVYI, YALL…DVIS, and LLMA…AKFI.

This sequence belongs to the TatC family. Forms a complex with TatA.

The protein resides in the cell membrane. Functionally, part of the twin-arginine translocation (Tat) system that transports large folded proteins containing a characteristic twin-arginine motif in their signal peptide across membranes. In Carboxydothermus hydrogenoformans (strain ATCC BAA-161 / DSM 6008 / Z-2901), this protein is Sec-independent protein translocase protein TatC.